The chain runs to 194 residues: PRELI domain containing protein 3B (194 aa).

In terms of domain architecture, PRELI/MSF1 spans 1 to 172 (MKIWTSEHVF…VIHKLNAEIE (172 aa)). Residues Ser46 and Ser51 each carry the phosphoserine modification.

It belongs to the slowmo family.

The polypeptide is PRELI domain containing protein 3B (PRELID3B) (Sus scrofa (Pig)).